The primary structure comprises 116 residues: MSNHKLIEAVTKSQLRTDLPTFRPGDTVRVHVRIVEGTRERIQVFEGVVIKRHGGGISETFTVRKISSGVGVERTFPLHTPKIEKIEVKRRGKVRRAKLYYLRNLRGKAARIKEIR.

This sequence belongs to the bacterial ribosomal protein bL19 family.

This protein is located at the 30S-50S ribosomal subunit interface and may play a role in the structure and function of the aminoacyl-tRNA binding site. In Staphylococcus carnosus (strain TM300), this protein is Large ribosomal subunit protein bL19.